We begin with the raw amino-acid sequence, 206 residues long: Small ribosomal subunit protein uS4 (206 aa).

The region spanning 96–156 is the S4 RNA-binding domain; that stretch reads CRLDNVVYRM…EKSKNQLRIA (61 aa).

The protein belongs to the universal ribosomal protein uS4 family. As to quaternary structure, part of the 30S ribosomal subunit. Contacts protein S5. The interaction surface between S4 and S5 is involved in control of translational fidelity.

One of the primary rRNA binding proteins, it binds directly to 16S rRNA where it nucleates assembly of the body of the 30S subunit. Functionally, with S5 and S12 plays an important role in translational accuracy. The polypeptide is Small ribosomal subunit protein uS4 (Ectopseudomonas mendocina (strain ymp) (Pseudomonas mendocina)).